The primary structure comprises 300 residues: Ribonuclease HIII (300 aa).

An RNase H type-2 domain is found at 86 to 300 (RSRIGVDESG…FNEVLGSGNQ (215 aa)). Residues Asp92, Glu93, and Asp196 each coordinate a divalent metal cation.

It belongs to the RNase HII family. RnhC subfamily. The cofactor is Mn(2+). Requires Mg(2+) as cofactor.

It is found in the cytoplasm. It catalyses the reaction Endonucleolytic cleavage to 5'-phosphomonoester.. Functionally, endonuclease that specifically degrades the RNA of RNA-DNA hybrids. This chain is Ribonuclease HIII, found in Chlamydia trachomatis serovar A (strain ATCC VR-571B / DSM 19440 / HAR-13).